A 297-amino-acid polypeptide reads, in one-letter code: Bax inhibitor 1 (297 aa).

Topologically, residues 1–53 (MSGPPPPYEEQSSHLYGQPASSQDGNAFIPEDFKYSTVVISCEPIIRQRFMHK) are lumenal. Residues 54 to 74 (VYSLLSCQLLASLSFCYWASV) traverse the membrane as a helical segment. The Cytoplasmic portion of the chain corresponds to 75-85 (STSLQNFIMSH). The chain crosses the membrane as a helical span at residues 86–106 (IALFYICMVVSLVSCIWLAVS). Topologically, residues 107–146 (PRPEDYEASVPEPLLTGSSEEPAQEQRRLPWYVLSSYKQK) are lumenal. Residues 147-167 (LTLLSIFTLSEAYCLSLVTLA) form a helical membrane-spanning segment. The Cytoplasmic portion of the chain corresponds to 168-171 (YDKD). Residues 172 to 192 (TVLSALLITTIVVVGVSLTAL) traverse the membrane as a helical segment. The Lumenal portion of the chain corresponds to 193–208 (SERFENVLNSATSIYY). Residues 209-229 (WLNWGLWIMIGMGLTALLFGW) form a helical membrane-spanning segment. Residues 230–239 (NTHSSKFNLL) are Cytoplasmic-facing. Residues 240–260 (YGWLGAILFTAYLFIDTQLIF) form a helical membrane-spanning segment. Over 261 to 270 (RKVYPDEEVR) the chain is Lumenal. The chain crosses the membrane as a helical span at residues 271 to 291 (CAMMLYLDIVNLFLSILRILA). Residues 292–297 (NSNDDN) lie on the Cytoplasmic side of the membrane.

This sequence belongs to the BI1 family. LFG subfamily.

It localises to the endoplasmic reticulum membrane. Its subcellular location is the vacuole membrane. The protein resides in the mitochondrion membrane. Functionally, links the unfolded protein response and programmed cell death and mediates mitochondrial-dependent apoptosis. Induces cell death and disruption of the mitochondrial transmembrane potential via the mitochondrial phosphate carrier MIR1. Dispensible for starvation-induced autophagy. In Saccharomyces cerevisiae (strain ATCC 204508 / S288c) (Baker's yeast), this protein is Bax inhibitor 1 (BXI1).